The primary structure comprises 589 residues: Leucine-rich repeat and immunoglobulin-like domain-containing nogo receptor-interacting protein 3 (589 aa).

Residues Met1–Gly23 form the signal peptide. In terms of domain architecture, LRRNT spans Cys24 to Ala53. The Extracellular segment spans residues Cys24 to Thr528. LRR repeat units lie at residues Glu54–Ser75, Thr78–Asn99, Arg102–His123, Ser126–Asp147, Ser150–Gly171, Gly174–His195, His206–Glu227, Asn246–Gln267, His270–Asp291, Arg294–Gly315, and Gln318–Ser339. The N-linked (GlcNAc...) asparagine glycan is linked to Asn184. N-linked (GlcNAc...) asparagine glycosylation is found at Asn246, Asn256, and Asn275. N-linked (GlcNAc...) asparagine glycosylation occurs at Asn323. The region spanning Asn351–Lys405 is the LRRCT domain. Residues Pro406–Thr495 form the Ig-like C2-type domain. Residues Cys428 and Cys479 are joined by a disulfide bond. Residues Asn487, Asn501, and Asn509 are each glycosylated (N-linked (GlcNAc...) asparagine). Residues Ala529 to Trp549 traverse the membrane as a helical segment. Residues Ser550–Ile589 lie on the Cytoplasmic side of the membrane.

It localises to the membrane. In Mus musculus (Mouse), this protein is Leucine-rich repeat and immunoglobulin-like domain-containing nogo receptor-interacting protein 3 (Lingo3).